The primary structure comprises 310 residues: Ribosomal protein L11 methyltransferase (310 aa).

S-adenosyl-L-methionine is bound by residues T153, G174, D196, and N239.

It belongs to the methyltransferase superfamily. PrmA family.

It is found in the cytoplasm. It catalyses the reaction L-lysyl-[protein] + 3 S-adenosyl-L-methionine = N(6),N(6),N(6)-trimethyl-L-lysyl-[protein] + 3 S-adenosyl-L-homocysteine + 3 H(+). Its function is as follows. Methylates ribosomal protein L11. This chain is Ribosomal protein L11 methyltransferase, found in Janthinobacterium sp. (strain Marseille) (Minibacterium massiliensis).